The sequence spans 130 residues: Mediator of RNA polymerase II transcription subunit 10 (130 aa).

The protein belongs to the Mediator complex subunit 10 family. As to quaternary structure, component of the Mediator complex.

It is found in the nucleus. Its function is as follows. Component of the Mediator complex, a coactivator involved in the regulated transcription of nearly all RNA polymerase II-dependent genes. Mediator functions as a bridge to convey information from gene-specific regulatory proteins to the basal RNA polymerase II transcription machinery. Mediator is recruited to promoters by direct interactions with regulatory proteins and serves as a scaffold for the assembly of a functional preinitiation complex with RNA polymerase II and the general transcription factors. This Aedes aegypti (Yellowfever mosquito) protein is Mediator of RNA polymerase II transcription subunit 10 (MED10).